Here is a 122-residue protein sequence, read N- to C-terminus: MIQQESRLKVADNTGAKELLTIRVLGGSGRRYAGLGDVIVATVKDAIPGGNVKKGDVVKAVIVRTRKNTRRTDGSYIKFDENAAVILKNDGDPRGTRIFGPVGRELRDKKFMKIISLAPEVL.

The protein belongs to the universal ribosomal protein uL14 family. Part of the 50S ribosomal subunit. Forms a cluster with proteins L3 and L19. In the 70S ribosome, L14 and L19 interact and together make contacts with the 16S rRNA in bridges B5 and B8.

Functionally, binds to 23S rRNA. Forms part of two intersubunit bridges in the 70S ribosome. The protein is Large ribosomal subunit protein uL14 of Leifsonia xyli subsp. xyli (strain CTCB07).